Reading from the N-terminus, the 163-residue chain is Outer membrane protein assembly factor BamE (163 aa).

Positions 1–22 (MINKKQSLTLLSAIALSVSLSA) are cleaved as a signal peptide. Cysteine 23 carries N-palmitoyl cysteine lipidation. Cysteine 23 carries S-diacylglycerol cysteine lipidation. Positions 122-163 (EQSKLPMVNTTESAPQVPAQRPDEKPLVKENQTEAQVQKPIK) are disordered. Residues 142–153 (RPDEKPLVKENQ) are compositionally biased toward basic and acidic residues.

This sequence belongs to the BamE family. As to quaternary structure, part of the Bam complex.

Its subcellular location is the cell outer membrane. In terms of biological role, part of the outer membrane protein assembly complex, which is involved in assembly and insertion of beta-barrel proteins into the outer membrane. The sequence is that of Outer membrane protein assembly factor BamE from Shewanella oneidensis (strain ATCC 700550 / JCM 31522 / CIP 106686 / LMG 19005 / NCIMB 14063 / MR-1).